A 417-amino-acid polypeptide reads, in one-letter code: NADP-specific glutamate dehydrogenase A1 (417 aa).

Lys105 is an active-site residue.

This sequence belongs to the Glu/Leu/Phe/Val dehydrogenases family. In terms of assembly, homohexamer.

It catalyses the reaction L-glutamate + NADP(+) + H2O = 2-oxoglutarate + NH4(+) + NADPH + H(+). The polypeptide is NADP-specific glutamate dehydrogenase A1 (gdhA1) (Halobacterium salinarum (Halobacterium halobium)).